We begin with the raw amino-acid sequence, 382 residues long: Lipid-A-disaccharide synthase (382 aa).

It belongs to the LpxB family.

The catalysed reaction is 2-N,3-O-bis[(3R)-3-hydroxytetradecanoyl]-alpha-D-glucosaminyl 1-phosphate + UDP-2-N,3-O-bis[(3R)-3-hydroxytetradecanoyl]-alpha-D-glucosamine = lipid A disaccharide (E. coli) + UDP + H(+). It catalyses the reaction a lipid X + a UDP-2-N,3-O-bis[(3R)-3-hydroxyacyl]-alpha-D-glucosamine = a lipid A disaccharide + UDP + H(+). It functions in the pathway glycolipid biosynthesis; lipid IV(A) biosynthesis; lipid IV(A) from (3R)-3-hydroxytetradecanoyl-[acyl-carrier-protein] and UDP-N-acetyl-alpha-D-glucosamine: step 5/6. Condensation of UDP-2,3-diacylglucosamine and 2,3-diacylglucosamine-1-phosphate to form lipid A disaccharide, a precursor of lipid A, a phosphorylated glycolipid that anchors the lipopolysaccharide to the outer membrane of the cell. This Salmonella paratyphi B (strain ATCC BAA-1250 / SPB7) protein is Lipid-A-disaccharide synthase.